The following is a 341-amino-acid chain: Ribosomal RNA small subunit methyltransferase H (341 aa).

Residues 47–49 (GGY), D64, F91, D109, and Q116 contribute to the S-adenosyl-L-methionine site.

This sequence belongs to the methyltransferase superfamily. RsmH family.

The protein localises to the cytoplasm. The catalysed reaction is cytidine(1402) in 16S rRNA + S-adenosyl-L-methionine = N(4)-methylcytidine(1402) in 16S rRNA + S-adenosyl-L-homocysteine + H(+). Its function is as follows. Specifically methylates the N4 position of cytidine in position 1402 (C1402) of 16S rRNA. In Rhizobium etli (strain ATCC 51251 / DSM 11541 / JCM 21823 / NBRC 15573 / CFN 42), this protein is Ribosomal RNA small subunit methyltransferase H.